Here is a 185-residue protein sequence, read N- to C-terminus: MNNQKGLSVKSVVAIGIGAAIYVILARFTSIPTGIPNTNIEIVYPFLALLATIYGPVVGFSVGFIGHALSDFLMYGQTWWSWVLATAVLGLIIGLYGMRLDLENGVFTTKQMIGFNIVQIIANVVSWLIIAPVGDILIYSEPQNKVFLQGATATITNSISILILGTILLKAYAATKVKKGSLRRD.

The next 5 membrane-spanning stretches (helical) occupy residues 6-26 (GLSV…VILA), 46-66 (FLAL…GFIG), 78-98 (TWWS…LYGM), 113-133 (IGFN…IAPV), and 147-167 (FLQG…LGTI).

The protein belongs to the UPF0397 family.

The protein resides in the cell membrane. This Lactobacillus johnsonii (strain CNCM I-12250 / La1 / NCC 533) protein is UPF0397 protein LJ_1703.